A 461-amino-acid polypeptide reads, in one-letter code: MSRQVVRSSKFRHVFGQPAKADQCYEDVRVSQTTWDSGFCAVNPKFMALICEASGGGAFLVLPLGKTGRVDKNVPLVCGHTAPVLDIAWCPHNDNVIASGSEDCTVMVWEIPDGGLVLPLREPVITLEGHTKRVGIVAWHPTAQNVLLSAGCDNVILVWDVGTGAAVLTLGPDVHPDTIYSVDWSRDGALICTSCRDKRVRVIEPRKGTVVAEKDRPHEGTRPVHAVFVSEGKILTTGFSRMSERQVALWDTKHLEEPLSLQELDTSSGVLLPFFDPDTNIVYLCGKGDSSIRYFEITSEAPFLHYLSMFSSKESQRGMGYMPKRGLEVNKCEIARFYKLHERKCEPIAMTVPRKSDLFQEDLYPPTAGPDPALTAEEWLGGRDAGPLLISLKDGYVPPKSRELRVNRGLDSARRRATPEPSGTPSSDTVSRLEEDVRNLNAIVQKLQERLDRLEETVQAK.

Ser2 is modified (N-acetylserine). Ser2 carries the phosphoserine; by PKC modification. WD repeat units lie at residues 13–63 (HVFG…LVLP), 73–110 (NVPL…MVWE), 123–160 (PVIT…LVWD), 164–204 (GAAV…RVIE), 207–251 (KGTV…ALWD), 258–296 (PLSL…RYFE), and 302–349 (PFLH…EPIA). Basic and acidic residues predominate over residues 403–418 (ELRVNRGLDSARRRAT). The tract at residues 403-434 (ELRVNRGLDSARRRATPEPSGTPSSDTVSRLE) is disordered. The residue at position 412 (Ser412) is a Phosphoserine; by PKC. Position 418 is a phosphothreonine (Thr418). Residues 421-430 (PSGTPSSDTV) show a composition bias toward polar residues. Ser422 carries the phosphoserine modification. A coiled-coil region spans residues 424–461 (TPSSDTVSRLEEDVRNLNAIVQKLQERLDRLEETVQAK).

It belongs to the WD repeat coronin family. Binds actin. Post-translationally, phosphorylation at Ser-412 by PKC strongly down-regulates the association with actin. Polyubiquitinated by RNF128 with 'Lys-48'-linked chains, leading to proteasomal degradation. In terms of tissue distribution, expressed in spleen, lymph nodes, thymus, brain and at very lower levels in lung. Also expressed in cells of the lymphoid/myeloid lineage. Not expressed in Kuffper cells.

The protein localises to the cytoplasm. Its subcellular location is the cytoskeleton. It localises to the cell cortex. It is found in the cytoplasmic vesicle. The protein resides in the phagosome membrane. May be a crucial component of the cytoskeleton of highly motile cells, functioning both in the invagination of large pieces of plasma membrane, as well as in forming protrusions of the plasma membrane involved in cell locomotion. In mycobacteria-infected cells, its retention on the phagosomal membrane prevents fusion between phagosomes and lysosomes. This Mus musculus (Mouse) protein is Coronin-1A (Coro1a).